Consider the following 209-residue polypeptide: Na(+)-translocating NADH-quinone reductase subunit D (209 aa).

A run of 5 helical transmembrane segments spans residues 42-62 (LVMT…ISLI), 66-86 (IPNS…VIVV), 103-123 (VFVG…AYAM), 131-151 (FMDG…VGFV), and 178-198 (NGLF…IWGL).

This sequence belongs to the NqrDE/RnfAE family. As to quaternary structure, composed of six subunits; NqrA, NqrB, NqrC, NqrD, NqrE and NqrF.

The protein localises to the cell inner membrane. The catalysed reaction is a ubiquinone + n Na(+)(in) + NADH + H(+) = a ubiquinol + n Na(+)(out) + NAD(+). Its function is as follows. NQR complex catalyzes the reduction of ubiquinone-1 to ubiquinol by two successive reactions, coupled with the transport of Na(+) ions from the cytoplasm to the periplasm. NqrA to NqrE are probably involved in the second step, the conversion of ubisemiquinone to ubiquinol. The chain is Na(+)-translocating NADH-quinone reductase subunit D from Yersinia pseudotuberculosis serotype O:1b (strain IP 31758).